Here is an 819-residue protein sequence, read N- to C-terminus: DNA topoisomerase 4 subunit A (819 aa).

The 467-residue stretch at Leu-30–Leu-496 folds into the Topo IIA-type catalytic domain. Tyr-118 functions as the O-(5'-phospho-DNA)-tyrosine intermediate in the catalytic mechanism.

Belongs to the type II topoisomerase GyrA/ParC subunit family. ParC type 2 subfamily. As to quaternary structure, heterotetramer composed of ParC and ParE.

The protein resides in the cell membrane. It carries out the reaction ATP-dependent breakage, passage and rejoining of double-stranded DNA.. Functionally, topoisomerase IV is essential for chromosome segregation. It relaxes supercoiled DNA. Performs the decatenation events required during the replication of a circular DNA molecule. This Streptococcus pyogenes serotype M18 (strain MGAS8232) protein is DNA topoisomerase 4 subunit A.